The following is a 96-amino-acid chain: Small ribosomal subunit protein bS18 (96 aa).

It belongs to the bacterial ribosomal protein bS18 family. Part of the 30S ribosomal subunit. Forms a tight heterodimer with protein bS6.

In terms of biological role, binds as a heterodimer with protein bS6 to the central domain of the 16S rRNA, where it helps stabilize the platform of the 30S subunit. The protein is Small ribosomal subunit protein bS18 of Borreliella burgdorferi (strain ATCC 35210 / DSM 4680 / CIP 102532 / B31) (Borrelia burgdorferi).